We begin with the raw amino-acid sequence, 1331 residues long: ABC multidrug transporter MDR2 (1331 aa).

Basic and acidic residues-rich tracts occupy residues 1–20 (MVEV…KQEN) and 31–41 (SDKEKVAKKGN). The interval 1–51 (MVEVSEKPNTQDDGVSKQENRNPASSSSSTSDKEKVAKKGNSDATKSSTPE) is disordered. Transmembrane regions (helical) follow at residues 93–113 (MIFL…LPLF), 147–167 (YFVY…VGFI), 219–239 (KVGL…IGYV), and 242–262 (WKLA…MGGI). Residues 97 to 387 (AIVSLASIAA…VAPNTQAFAS (291 aa)) enclose the ABC transmembrane type-1 1 domain. Asparagine 293 carries N-linked (GlcNAc...) asparagine glycosylation. 2 helical membrane-spanning segments follow: residues 325-345 (LGIM…LGFW) and 358-378 (LSAI…IGNV). One can recognise an ABC transporter 1 domain in the interval 422–667 (IEFRGIKHIY…KGTYLQLVEA (246 aa)). 457–464 (GPSGSGKS) lines the ATP pocket. N-linked (GlcNAc...) asparagine glycosylation is found at asparagine 529 and asparagine 737. 2 helical membrane passes run 762-782 (LCGF…SVFF) and 810-830 (FLML…IFAI). Positions 764 to 1051 (GFFFAVLSGA…VFSFSPDMGK (288 aa)) constitute an ABC transmembrane type-1 2 domain. Asparagine 860 carries an N-linked (GlcNAc...) asparagine glycan. 4 helical membrane-spanning segments follow: residues 884–904 (LGTI…ALAF), 910–930 (LVCI…FWIL), 995–1015 (ASQS…GGLL), and 1025–1045 (FFLC…VFSF). The 239-residue stretch at 1086-1324 (IEFRDVHFRY…KGRYYELVHM (239 aa)) folds into the ABC transporter 2 domain. The N-linked (GlcNAc...) asparagine glycan is linked to asparagine 1108. 1121 to 1128 (GPSGCGKS) contacts ATP.

The protein belongs to the ABC transporter superfamily. ABCB family. Multidrug resistance exporter (TC 3.A.1.201) subfamily.

The protein localises to the cell membrane. The catalysed reaction is itraconazole(in) + ATP + H2O = itraconazole(out) + ADP + phosphate + H(+). In terms of biological role, pleiotropic ABC efflux transporter that may be involved in the modulation susceptibility to a wide range of unrelated cytotoxic compounds. This is ABC multidrug transporter MDR2 from Trichophyton equinum (strain ATCC MYA-4606 / CBS 127.97) (Horse ringworm fungus).